A 426-amino-acid chain; its full sequence is Synaptotagmin-13 (426 aa).

At 1–6 (MVLSVP) the chain is on the vesicular side. The helical transmembrane segment at 7–29 (VIALGATLGTATSILALCGVTCL) threads the bilayer. Over 30-426 (CRHMHPKKGL…QIAMWHQLHL (397 aa)) the chain is Cytoplasmic. C2 domains follow at residues 158–275 (QAPK…AQWG) and 287–422 (GTGE…AMWH).

It belongs to the synaptotagmin family. As to quaternary structure, interacts with NRXN1. Expressed in brain, spleen, kidney and testis.

It is found in the membrane. In terms of biological role, may be involved in transport vesicle docking to the plasma membrane. This chain is Synaptotagmin-13 (Syt13), found in Rattus norvegicus (Rat).